The following is a 155-amino-acid chain: Deoxyuridine 5'-triphosphate nucleotidohydrolase (155 aa).

Substrate is bound by residues 74–76 (RSG), Asn-87, and 91–93 (LID).

The protein belongs to the dUTPase family. The cofactor is Mg(2+).

It carries out the reaction dUTP + H2O = dUMP + diphosphate + H(+). It participates in pyrimidine metabolism; dUMP biosynthesis; dUMP from dCTP (dUTP route): step 2/2. Functionally, this enzyme is involved in nucleotide metabolism: it produces dUMP, the immediate precursor of thymidine nucleotides and it decreases the intracellular concentration of dUTP so that uracil cannot be incorporated into DNA. The polypeptide is Deoxyuridine 5'-triphosphate nucleotidohydrolase (Xylella fastidiosa (strain M12)).